Here is a 209-residue protein sequence, read N- to C-terminus: Large ribosomal subunit protein uL3 (209 aa).

A disordered region spans residues 129–153 (SRGPMSHGSKFHRAPGSMGAASDPS).

This sequence belongs to the universal ribosomal protein uL3 family. Part of the 50S ribosomal subunit. Forms a cluster with proteins L14 and L19.

In terms of biological role, one of the primary rRNA binding proteins, it binds directly near the 3'-end of the 23S rRNA, where it nucleates assembly of the 50S subunit. This is Large ribosomal subunit protein uL3 from Clostridium perfringens (strain 13 / Type A).